The chain runs to 214 residues: MPKLPAVGIDLGTTYSCVGVFQHGKVEIIANDQGNRTTPSYVAFTESERLIGDAAKNQVAMNPNNTIFDAKRLIGRRFDDATVQSDMKHWPFEAFAENGKPRIRGTFDVSVLTIEDGFEVKATAGDTHLGREDFDNRLVNHLVQEFQRKHGKDLGQNKRALRRLRTACERAKRTLSSSTQASIEIDSLFEGVDFYTSVTRARFEELNGDLFRGT.

It belongs to the heat shock protein 70 family.

The chain is Heat shock 70 kDa protein cognate 1 (Hsc70-1) from Drosophila simulans (Fruit fly).